The primary structure comprises 833 residues: Leucine--tRNA ligase (833 aa).

Positions 41-52 (PYPSGAGLHVGH) match the 'HIGH' region motif. Residues 610-614 (KMSKS) carry the 'KMSKS' region motif. Lys613 is a binding site for ATP.

Belongs to the class-I aminoacyl-tRNA synthetase family.

The protein resides in the cytoplasm. It catalyses the reaction tRNA(Leu) + L-leucine + ATP = L-leucyl-tRNA(Leu) + AMP + diphosphate. The chain is Leucine--tRNA ligase from Streptococcus equi subsp. equi (strain 4047).